The following is a 365-amino-acid chain: Homeobox protein Nkx-6.1 (365 aa).

Positions 35–136 (LYPAAYPPLP…SSSSASATSA (102 aa)) are disordered. 3 stretches are compositionally biased toward low complexity: residues 48–59 (PSSSSSSSSSSS), 69–92 (PGGLKPPAAGGLSSLGSPPQQLSA), and 110–136 (ASGAALPSASPSGSSSSSSSSASATSA). The tract at residues 102–269 (LSRPSMPVAS…KYLAGPERAR (168 aa)) is repressor domain. At Arg190 the chain carries Asymmetric dimethylarginine. The segment at residues 237–296 (RKHTRPTFSGQQIFALEKTFEQTKYLAGPERARLAYSLGMTESQVKVWFQNRRTKWRKKH) is a DNA-binding region (homeobox). The disordered stretch occupies residues 295-365 (KHAAEMATAK…LHASEAEGSS (71 aa)). Basic and acidic residues predominate over residues 305 to 318 (KKQDSETERLKGTS). An involved in DNA-binding region spans residues 307 to 365 (QDSETERLKGTSENEEDDDDYNKPLDPNSDDEKITQLLKKHKSSGGSLLLHASEAEGSS).

In terms of tissue distribution, pancreatic beta cells.

Its subcellular location is the nucleus. Transcription factor which binds to specific A/T-rich DNA sequences in the promoter regions of a number of genes. Involved in the development of insulin-producing beta cells in the islets of Langerhans at the secondary transition. Together with NKX2-2 and IRX3 acts to restrict the generation of motor neurons to the appropriate region of the neural tube. Belongs to the class II proteins of neuronal progenitor factors, which are induced by SHH signals. This Rattus norvegicus (Rat) protein is Homeobox protein Nkx-6.1 (Nkx6-1).